We begin with the raw amino-acid sequence, 253 residues long: 5'/3'-nucleotidase SurE (253 aa).

Positions 8, 9, 39, and 92 each coordinate a divalent metal cation.

It belongs to the SurE nucleotidase family. A divalent metal cation is required as a cofactor.

It is found in the cytoplasm. It catalyses the reaction a ribonucleoside 5'-phosphate + H2O = a ribonucleoside + phosphate. It carries out the reaction a ribonucleoside 3'-phosphate + H2O = a ribonucleoside + phosphate. The enzyme catalyses [phosphate](n) + H2O = [phosphate](n-1) + phosphate + H(+). Its function is as follows. Nucleotidase with a broad substrate specificity as it can dephosphorylate various ribo- and deoxyribonucleoside 5'-monophosphates and ribonucleoside 3'-monophosphates with highest affinity to 3'-AMP. Also hydrolyzes polyphosphate (exopolyphosphatase activity) with the preference for short-chain-length substrates (P20-25). Might be involved in the regulation of dNTP and NTP pools, and in the turnover of 3'-mononucleotides produced by numerous intracellular RNases (T1, T2, and F) during the degradation of various RNAs. In Escherichia coli O7:K1 (strain IAI39 / ExPEC), this protein is 5'/3'-nucleotidase SurE.